Consider the following 246-residue polypeptide: Probable transcriptional regulatory protein COSY_0365 (246 aa).

This sequence belongs to the TACO1 family.

It localises to the cytoplasm. This Vesicomyosocius okutanii subsp. Calyptogena okutanii (strain HA) protein is Probable transcriptional regulatory protein COSY_0365.